The sequence spans 194 residues: dTTP/UTP pyrophosphatase (194 aa).

D68 acts as the Proton acceptor in catalysis.

It belongs to the Maf family. YhdE subfamily. A divalent metal cation serves as cofactor.

The protein localises to the cytoplasm. It catalyses the reaction dTTP + H2O = dTMP + diphosphate + H(+). The catalysed reaction is UTP + H2O = UMP + diphosphate + H(+). Functionally, nucleoside triphosphate pyrophosphatase that hydrolyzes dTTP and UTP. May have a dual role in cell division arrest and in preventing the incorporation of modified nucleotides into cellular nucleic acids. This is dTTP/UTP pyrophosphatase from Clostridioides difficile (strain 630) (Peptoclostridium difficile).